A 335-amino-acid chain; its full sequence is Methionine import ATP-binding protein MetN (335 aa).

The region spanning 2–241 (IQFKDSYKHY…PQHPTTRSFV (240 aa)) is the ABC transporter domain. 38–45 (GHSGAGKS) provides a ligand contact to ATP.

It belongs to the ABC transporter superfamily. Methionine importer (TC 3.A.1.24) family. The complex is composed of two ATP-binding proteins (MetN), two transmembrane proteins (MetI) and a solute-binding protein (MetQ).

The protein localises to the cell inner membrane. The enzyme catalyses L-methionine(out) + ATP + H2O = L-methionine(in) + ADP + phosphate + H(+). It carries out the reaction D-methionine(out) + ATP + H2O = D-methionine(in) + ADP + phosphate + H(+). Its function is as follows. Part of the ABC transporter complex MetNIQ involved in methionine import. Responsible for energy coupling to the transport system. The polypeptide is Methionine import ATP-binding protein MetN (Xylella fastidiosa (strain Temecula1 / ATCC 700964)).